We begin with the raw amino-acid sequence, 424 residues long: UPF0597 protein Sbal_3070 (424 aa).

Belongs to the UPF0597 family.

This Shewanella baltica (strain OS155 / ATCC BAA-1091) protein is UPF0597 protein Sbal_3070.